The primary structure comprises 295 residues: Deleted in azoospermia-like (295 aa).

Positions 1 to 10 (MSTANPETPN) are enriched in polar residues. A disordered region spans residues 1 to 25 (MSTANPETPNSTISREASTQSSSAA). Residues 11-25 (STISREASTQSSSAA) are compositionally biased toward low complexity. An RRM domain is found at 40–115 (NTVFVGGIDV…KKLKLGPAIR (76 aa)). Residues 80-132 (KGYGFVSFFNDVDVQKIVESQINFHGKKLKLGPAIRKQNLCAYHVQPRPLVFN) form a homodimerization region. Positions 167 to 190 (AYPTYPNSPVQVITGYQLPVYNYQ) constitute a DAZ domain. Phosphotyrosine is present on Tyr-276.

Belongs to the RRM DAZ family. As to quaternary structure, homodimer and heterodimer. Multiple DAZL RRMs can bind to a single RNA containing multiple GUU triplets. Forms a heterodimer with DAZ. Interacts with BOLL, DAZAP1 and DAZAP2. Interacts with PUM2. Testis specific.

It is found in the cytoplasm. The protein localises to the nucleus. In terms of biological role, RNA-binding protein, which is essential for gametogenesis in both males and females. Plays a central role during spermatogenesis. Acts by binding to the 3'-UTR of mRNA, specifically recognizing GUU triplets, and thereby regulating the translation of key transcripts. This is Deleted in azoospermia-like (DAZL) from Homo sapiens (Human).